Consider the following 149-residue polypeptide: uncharacterized protein (149 aa).

Residues 12–31 form a helical membrane-spanning segment; it reads FKNLVIGAVSGVAAAYFLST.

The protein localises to the membrane. This is an uncharacterized protein from Streptococcus pyogenes serotype M6 (strain ATCC BAA-946 / MGAS10394).